The sequence spans 103 residues: Serine rich endogenous peptide 9 (103 aa).

A signal peptide spans 1–25 (MENIFFSKLTQVFIVALLCIFIYRT). A disordered region spans residues 54–103 (IYVKPPPLKSKDSNQKGKRGETYYKPNSEIGTGPSHSGHGGSSIEHVSSP). Residues 62 to 75 (KSKDSNQKGKRGET) show a composition bias toward basic and acidic residues. Positions 82–96 (EIGTGPSHSGHGGSS) match the SCOOP motif motif. A compositionally biased stretch (low complexity) spans 84-103 (GTGPSHSGHGGSSIEHVSSP). Residues 88–90 (SHS) carry the SxS motif essential for MIK2 binding motif.

It belongs to the serine rich endogenous peptide (SCOOP) phytocytokine family. In terms of assembly, interacts with MIK2 (via extracellular leucine-rich repeat domain); this interaction triggers the formation of complex between MIK2 and the BAK1/SERK3 and SERK4 coreceptors, and subsequent BAK1 activation by phosphorylation. In terms of tissue distribution, mostly expressed in seedlings shoots and roots, and, to a lower extent, in leaves, but barely in flowers.

The protein localises to the cell membrane. Its subcellular location is the secreted. It localises to the extracellular space. The protein resides in the apoplast. Brassicaceae-specific phytocytokine (plant endogenous peptide released into the apoplast) perceived by MIK2 in a BAK1/SERK3 and SERK4 coreceptors-dependent manner, that modulates various physiological and antimicrobial processes including growth prevention and reactive oxygen species (ROS) response regulation. The polypeptide is Serine rich endogenous peptide 9 (Arabidopsis thaliana (Mouse-ear cress)).